The primary structure comprises 206 residues: Probable N-acetyltransferase 14 (206 aa).

Residues 9–206 enclose the N-acetyltransferase domain; that stretch reads LSVREMREEE…TIVQEFRKDI (198 aa). 2 helical membrane passes run 37–57 and 60–80; these read LILYILTRPMTLLLMAVASSG and FILNSFSVALVIPVLLTIVGL.

This sequence belongs to the camello family.

The protein localises to the membrane. Functionally, probable acetyltransferase. This is Probable N-acetyltransferase 14 (nat14) from Xenopus tropicalis (Western clawed frog).